The following is a 239-amino-acid chain: Proteasome activator complex subunit 2 (239 aa).

Alanine 2 bears the N-acetylalanine mark. A Phosphoserine modification is found at serine 10. Residues 65-86 form a disordered region; the sequence is DIPIPDPPPKDDEMETDKQEKK. A compositionally biased stretch (basic and acidic residues) spans 72–86; it reads PPKDDEMETDKQEKK.

The protein belongs to the PA28 family. As to quaternary structure, heterodimer of PSME1 and PSME2, which forms a hexameric ring.

Functionally, implicated in immunoproteasome assembly and required for efficient antigen processing. The PA28 activator complex enhances the generation of class I binding peptides by altering the cleavage pattern of the proteasome. The protein is Proteasome activator complex subunit 2 (PSME2) of Bos taurus (Bovine).